Here is a 199-residue protein sequence, read N- to C-terminus: LIM domain-containing protein E (199 aa).

An LIM zinc-binding domain is found at 5–65; it reads VKCGACAKTA…PVHTPKVSAT (61 aa). Residues 134–199 are disordered; the sequence is YAVFGADGQP…EEEQQYEEEQ (66 aa). Low complexity-rich tracts occupy residues 146-155 and 163-174; these read EQQEQQQYTE and EEQQYQEEQQQY. A compositionally biased stretch (acidic residues) spans 175–199; that stretch reads QEEEQQYQEEEQQYQEEEQQYEEEQ.

As to quaternary structure, may interact with rac1A.

Its subcellular location is the cytoplasm. It is found in the cell cortex. It localises to the nucleus. The protein resides in the cell projection. The protein localises to the lamellipodium. Its subcellular location is the filopodium. It is found in the cytoskeleton. In terms of biological role, associates with the actin cytoskeleton and may regulate actin polymerization in lamellipodia, through a rac1-dependent signaling pathway. May play a role in cell motility. Involved in cytokinesis by regulating the microtubule system and linking it to the cortical actin network. This Dictyostelium discoideum (Social amoeba) protein is LIM domain-containing protein E (limE).